The following is a 455-amino-acid chain: MSTPTTNSVDTPLPGNGPSTPSSSPGGKEDGPEPCPGGADPDVPSTDGADSASVVVILDTAEEPERKRKKGPAPKMLGDELCQVCGDTASGFHYNVLSCEGCKGFFRRSVIRGGAGRYACRGGGTCQMDAFMRRKCQQCRLRKCKEAGMREQCVLSKEQIRKKKIRKQQQQQQQQSSPTGPGVSSSSPASGPGASPGGSDGGGQGSGEGEGVQLTAAQELMIQQLVAAQLQCNKRSFSDQPKVTPWPLGADPQSRDARQQRFAHFTELAIISVQEIVDFAKQVPGFLQLGREDQIALLKASTIEIMLLETARRYNHETECITFLKDFTYSKDDFHRAGLQVEFINPIFEFSRAMRRLGLDDAEYALLIAINIFSADRPNVQEPSRVEALQQPYVDALLSYTRIKRPQDQLRFPRMLMKLVSLRTLSSVHSEQVFALRLQDKKLPPLLSEIWDVHE.

Residues 1-10 show a composition bias toward polar residues; it reads MSTPTTNSVD. The interval 1–53 is disordered; the sequence is MSTPTTNSVDTPLPGNGPSTPSSSPGGKEDGPEPCPGGADPDVPSTDGADSAS. A transactivation AF-1; required for ligand-independent transactivation function region spans residues 1 to 80; it reads MSTPTTNSVD…GPAPKMLGDE (80 aa). A compositionally biased stretch (low complexity) spans 14-26; it reads PGNGPSTPSSSPG. Residues 79–156 constitute a DNA-binding region (nuclear receptor); that stretch reads DELCQVCGDT…AGMREQCVLS (78 aa). 2 NR C4-type zinc fingers span residues 82-102 and 120-144; these read CQVCGDTASGFHYNVLSCEGC and CRGGGTCQMDAFMRRKCQQCRLRKC. Residues 164–210 are disordered; that stretch reads KIRKQQQQQQQQSSPTGPGVSSSSPASGPGASPGGSDGGGQGSGEGE. The span at 168-193 shows a compositional bias: low complexity; the sequence is QQQQQQQQSSPTGPGVSSSSPASGPG. Positions 194-210 are enriched in gly residues; that stretch reads ASPGGSDGGGQGSGEGE. The segment at 214 to 455 is transactivation AF-2; required for ligand-dependent transactivation function; mediates interaction with CCAR2; that stretch reads LTAAQELMIQ…LLSEIWDVHE (242 aa). Residues 217–455 enclose the NR LBD domain; sequence AQELMIQQLV…LLSEIWDVHE (239 aa). Glycyl lysine isopeptide (Lys-Gly) (interchain with G-Cter in SUMO2) cross-links involve residues lysine 404 and lysine 442.

Belongs to the nuclear hormone receptor family. NR1 subfamily. In terms of assembly, forms a heterodimer with RXR. Interacts with CCAR2 (via N-terminus) in a ligand-independent manner. Interacts (when sumoylated) with GPS2; interaction with GPS2 onto hepatic acute phase protein promoters prevents N-Cor corepressor complex dissociation. Interacts with ABCA12 and ABCA1; this interaction is required for ABCA1 localization to the cell surface and is necessary for its normal activity and stability. In terms of processing, sumoylated by SUMO2 at Lys-404 and Lys-442 during the hepatic acute phase response, leading to promote interaction with GPS2 and prevent N-Cor corepressor complex dissociation.

Its subcellular location is the nucleus. Nuclear receptor that exhibits a ligand-dependent transcriptional activation activity. Binds preferentially to double-stranded oligonucleotide direct repeats having the consensus half-site sequence 5'-AGGTCA-3' and 4-nt spacing (DR-4). Regulates cholesterol uptake through MYLIP-dependent ubiquitination of LDLR, VLDLR and LRP8; DLDLR and LRP8. Interplays functionally with RORA for the regulation of genes involved in liver metabolism. Induces LPCAT3-dependent phospholipid remodeling in endoplasmic reticulum (ER) membranes of hepatocytes, driving SREBF1 processing and lipogenesis. Via LPCAT3, triggers the incorporation of arachidonate into phosphatidylcholines of ER membranes, increasing membrane dynamics and enabling triacylglycerols transfer to nascent very low-density lipoprotein (VLDL) particles. Via LPCAT3 also counteracts lipid-induced ER stress response and inflammation, likely by modulating SRC kinase membrane compartmentalization and limiting the synthesis of lipid inflammatory mediators. Plays an anti-inflammatory role during the hepatic acute phase response by acting as a corepressor: inhibits the hepatic acute phase response by preventing dissociation of the N-Cor corepressor complex. The polypeptide is Oxysterols receptor LXR-beta (NR1H2) (Bos taurus (Bovine)).